We begin with the raw amino-acid sequence, 251 residues long: Tropomyosin-2 (251 aa).

Residues 1 to 251 (MSGEEKLGKL…DTVADEPDDE (251 aa)) are a coiled coil.

Belongs to the tropomyosin family. As to quaternary structure, homodimer. In terms of tissue distribution, striated muscle specific.

In Podocoryna carnea (Hydrozoan), this protein is Tropomyosin-2 (TPM2).